The following is a 173-amino-acid chain: Lipoprotein signal peptidase (173 aa).

The next 3 membrane-spanning stretches (helical) occupy residues 11–31, 69–89, and 93–113; these read FGLI…WIVT, TTRW…AFWM, and QAKG…GNIV. Active-site residues include D123 and D142. Residues 134–154 traverse the membrane as a helical segment; sequence PFMIFNVADACITIGVLLLVA.

Belongs to the peptidase A8 family.

The protein localises to the cell inner membrane. It catalyses the reaction Release of signal peptides from bacterial membrane prolipoproteins. Hydrolyzes -Xaa-Yaa-Zaa-|-(S,diacylglyceryl)Cys-, in which Xaa is hydrophobic (preferably Leu), and Yaa (Ala or Ser) and Zaa (Gly or Ala) have small, neutral side chains.. It participates in protein modification; lipoprotein biosynthesis (signal peptide cleavage). This protein specifically catalyzes the removal of signal peptides from prolipoproteins. The polypeptide is Lipoprotein signal peptidase (Sphingopyxis alaskensis (strain DSM 13593 / LMG 18877 / RB2256) (Sphingomonas alaskensis)).